A 159-amino-acid polypeptide reads, in one-letter code: Protein-export protein SecB (159 aa).

Belongs to the SecB family. Homotetramer, a dimer of dimers. One homotetramer interacts with 1 SecA dimer.

The protein resides in the cytoplasm. Its function is as follows. One of the proteins required for the normal export of preproteins out of the cell cytoplasm. It is a molecular chaperone that binds to a subset of precursor proteins, maintaining them in a translocation-competent state. It also specifically binds to its receptor SecA. The polypeptide is Protein-export protein SecB (Nitrobacter hamburgensis (strain DSM 10229 / NCIMB 13809 / X14)).